Consider the following 78-residue polypeptide: UPF0349 protein YuzB (78 aa).

It belongs to the UPF0349 family.

The chain is UPF0349 protein YuzB (yuzB) from Bacillus subtilis (strain 168).